The chain runs to 223 residues: N-terminal Xaa-Pro-Lys N-methyltransferase 1-B (223 aa).

S-adenosyl-L-methionine contacts are provided by residues G69, R74, 91–93 (DVT), 119–120 (LQ), and Q135.

Belongs to the methyltransferase superfamily. NTM1 family.

It is found in the nucleus. The catalysed reaction is N-terminal L-alanyl-L-prolyl-L-lysyl-[protein] + 3 S-adenosyl-L-methionine = N-terminal N,N,N-trimethyl-L-alanyl-L-prolyl-L-lysyl-[protein] + 3 S-adenosyl-L-homocysteine + 3 H(+). It catalyses the reaction N-terminal L-seryl-L-prolyl-L-lysyl-[protein] + 3 S-adenosyl-L-methionine = N-terminal N,N,N-trimethyl-L-seryl-L-prolyl-L-lysyl-[protein] + 3 S-adenosyl-L-homocysteine + 3 H(+). The enzyme catalyses N-terminal L-prolyl-L-prolyl-L-lysyl-[protein] + 2 S-adenosyl-L-methionine = N-terminal N,N-dimethyl-L-prolyl-L-prolyl-L-lysyl-[protein] + 2 S-adenosyl-L-homocysteine + 2 H(+). Its function is as follows. Distributive alpha-N-methyltransferase that methylates the N-terminus of target proteins containing the N-terminal motif [Ala/Gly/Pro/Ser]-Pro-Lys when the initiator Met is cleaved. Specifically catalyzes mono-, di- or tri-methylation of the exposed alpha-amino group of the Ala, Gly or Ser residue in the [Ala/Gly/Ser]-Pro-Lys motif and mono- or di-methylation of Pro in the Pro-Pro-Lys motif. Required during mitosis for normal bipolar spindle formation and chromosome segregation via its action on target proteins. The polypeptide is N-terminal Xaa-Pro-Lys N-methyltransferase 1-B (ntmt1-b) (Xenopus laevis (African clawed frog)).